The primary structure comprises 420 residues: L-glutamine:2-deoxy-scyllo-inosose aminotransferase (420 aa).

Lysine 201 carries the N6-(pyridoxal phosphate)lysine modification.

The protein belongs to the DegT/DnrJ/EryC1 family. L-glutamine:2-deoxy-scyllo-inosose/scyllo-inosose aminotransferase subfamily. Pyridoxal 5'-phosphate is required as a cofactor.

The catalysed reaction is 2-deoxy-L-scyllo-inosose + L-glutamine = 2-deoxy-scyllo-inosamine + 2-oxoglutaramate. The enzyme catalyses 3-amino-2,3-dideoxy-scyllo-inosose + L-glutamine = 2-deoxystreptamine + 2-oxoglutaramate. Its pathway is metabolic intermediate biosynthesis; 2-deoxystreptamine biosynthesis; 2-deoxystreptamine from D-glucose 6-phosphate: step 2/4. It functions in the pathway antibiotic biosynthesis; gentamicin biosynthesis. In terms of biological role, catalyzes the PLP-dependent transamination of 2-deoxy-scyllo-inosose (2-DOI) to form 2-deoxy-scyllo-inosamine (2-DOIA) using L-glutamine as the amino donor. Also catalyzes the transamination of 3-amino-2,3-dideoxy-scyllo-inosose (keto-2-DOIA) into 2-deoxystreptamine (2-DOS). This Micromonospora echinospora (Micromonospora purpurea) protein is L-glutamine:2-deoxy-scyllo-inosose aminotransferase (gntA).